The sequence spans 451 residues: UPF0210 protein NMCC_1554 (451 aa).

Belongs to the UPF0210 family. As to quaternary structure, homodimer.

The polypeptide is UPF0210 protein NMCC_1554 (Neisseria meningitidis serogroup C (strain 053442)).